A 2098-amino-acid chain; its full sequence is MVLVSKGDFIWIEPGKTEGSIPIGARVIDQDHGRLKVIDDLGNEQWLSADRRVRLMHPTSVQGVEDMCQLGDFHESAILRNLFIRYREKLIYAYTGSILIAVNPYMDIAIYTADEIRMYKRKRIGELPPHIFAIADNAYTNMRREKKNQSVIISGESGAGKTESTKLVLQFLATISGQHSWIEQQVLEANPVLEAFGNAKTIRNDNSSRFGKYIDVHFNESGSIEGAKIEQYLLEKSRIVTQSENERNYHIFYCLLAGLSREEKSELELGTAADYYYLIQGKTLTAEGRDDAADLAEIRSAMRVLMINEQEIGSIFKLLASLLHIGNIRFRQNTNDNMESVDVADPSTLVRIAKLLQLHEQNLLDAITTKSLVTREERVISRLNGQQAVDARDALAKAIYGKLFIHIVRRVNDAIYKPSQSRRTSIGILDIFGFENFESNSFEQLCINFANETLQQFFVHHVFKMEQKEYDEEHINWRHIKFVDNQATVDLIAQRPLNILSLIDEESIFPKGTDKTMLLKLHSTHGRNELYLQPKSELQRAFGVTHFAGNVFYNTRGFLEKNRDSFSADLSVLISSSKMPFLARLFDDIEYDTSSRKKVTVGNQFRRSLEQLMSQLTQTHPFFIRCIKPNEMKRALVMDRDLVLRQLRYSGMMETIKIRRSGYPIRHDYYPFVFRYRVLVSSIQGPVNRIDLHDAAKKICHMILGTNADYQLGKTKVFLKDKHDLVLEQEYYRILKDKAIVIQKNVRRWLVRKDFEKQRQAAVTIQTAWRGFDQRKRYRQIISGFSRLQAVLRSRQLVSHYQTLRKTIIQFQAVCRGSLVRRQVGEKRKRGEKAPLTEVSSTASVISDSHEELVGHLFDFLPSDGKDSGNENDSADSSRRGSYSRLHTSPVMPPANIPRVDSYVDEDLSKYQFGKYAATFFQAQATATHVKKPLKTALLTHTEPSAQLAALTAWTTILRFMGDLADVKPGSTNGSEVYDKTPVMIKLYATLGKKFSAHDLEEAMLSSEYGGAKTLKKGMGRKLISMTLKRKGKINGSDTSSISSDSVYSSFNAMLENKPMTSLDKLHYIIGLGILREDLRDEIYCQLCKQLSNNPSKLSAARGWILLSLCVGCFAPSERFIKYLFCFIRERGPAGTGYSKYIEDRLRRTQVNGTRHQPPSYVELQANKSQKPVVLAVTFMDGSVKTLCADSATTAAELCKQLAEKVGLTNSFGFSLYIALFDKVSSLGSGTDHVMDAISQCEQYAKEQGRQERNAPWRLFFRKEIFSPWHDPRDDPVSTNLIYQQVIRGIKYGEYRCDKDEELAAICAQQYYIDEGTMDVNKLENNLPSYLPDFEMSGKEMALEKWTQTIMHQYRKKFTGRLPSQIEVKENVVSVAKTKWPLLFSRFYEALKFAGPPLPKNEVIIAVNWTGVYVVDDREHVMLEFSFPEISTAYYGKGKRSTTDTCTVRTVVGDEYTFQSPNADDITNLIVMFLEGLKKRSRYLVAIKSQKGDEKNNFLEFEKGDLLILVNEFTGNTLLTESVVKGENSRTCLFGLIRAENVYVLPTLVKPSKNTLQIFPKDMDLSLDLFNNNKQVTVVDYNAEPYTLENFAEDNFNSQVKRVGSQISLMTLRKKESQIECWRFSREHIDQPLLKKLNGREDACRGAIEIFAAIMKYMGDEPSKRSRLGTHLTDHIFKLPISMEALRDELYCQLVKQLTLNPSIMSEERGWELLWMATGLFAPSAALAKEISHFLKSRPHPIALDCQNRMQKLAKGGSRKYPPHLVEVEAIQHKTTQIFHKVFFPDNTDEAIEVDSATRARDFCHKIGYRLGLKSSDGFSLFVKIKDKVLAVPESEFFFDYVRSLSDWVHTNHATQKDATMIPINYQVYFMRKLWYNFVAGADPQADIIFHYHQESQKYLLGYHKTTKNDVIELAALILRSMTKDGKNAPLAQIPQLLDEIIPKDSLKMYSASEWRKTISNAYARIEHLKSDQAKIEFLNYICRWPTFGSAFFPVSQYSDLNLPDRLLLAINQTGVNIYHLDTKNLLVQYPFNVICNWTSGNTYFNMTVGNMLKGNEGKKLLLDTTVGYKMDDLLTSYISLLISNQNNHPSKTREVAL.

Residues 62-732 (QGVEDMCQLG…HDLVLEQEYY (671 aa)) form the Myosin motor domain. 155-162 (GESGAGKT) contacts ATP. 2 actin-binding regions span residues 609–631 (LEQL…KPNE) and 711–725 (QLGK…KHDL). IQ domains are found at residues 735–757 (LKDK…DFEK), 758–787 (QRQA…GFSR), and 804–833 (LRKT…RGEK). Residues 860–898 (FLPSDGKDSGNENDSADSSRRGSYSRLHTSPVMPPANIP) are disordered. One can recognise a MyTH4 1 domain in the interval 929-1168 (HVKKPLKTAL…PSYVELQANK (240 aa)). A Ras-associating domain is found at 1171–1211 (KPVVLAVTFMDGSVKTLCADSATTAAELCKQLAEKVGLTNS). Residues 1173 to 1481 (VVLAVTFMDG…MFLEGLKKRS (309 aa)) form the FERM 1 domain. Residues 1479 to 1547 (KRSRYLVAIK…RAENVYVLPT (69 aa)) form the SH3 domain. The MyTH4 2 domain maps to 1624–1772 (FSREHIDQPL…PHLVEVEAIQ (149 aa)). The FERM 2 domain maps to 1778 to 2086 (IFHKVFFPDN…SYISLLISNQ (309 aa)).

The protein belongs to the TRAFAC class myosin-kinesin ATPase superfamily. Myosin family. In terms of assembly, interacts with unc-98.

The protein resides in the cytoplasm. In terms of biological role, myosins are actin-based motor molecules with ATPase activity. Unconventional myosins serve in intracellular movements. Their highly divergent tails are presumed to bind to membranous compartments, which would be moved relative to actin filaments. In Caenorhabditis elegans, this protein is Unconventional myosin heavy chain 6.